Consider the following 109-residue polypeptide: LSM2-LSM8 complex subunit LSM8 (109 aa).

The 70-residue stretch at 1-70 (MSATLKDYLN…IALVGLIDAE (70 aa)) folds into the Sm domain.

This sequence belongs to the snRNP Sm proteins family. As to quaternary structure, component of the heptameric LSM2-LSM8 complex that forms a seven-membered ring structure with a donut shape; an RNA strand can pass through the hole in the center of the ring structure. The LSm subunits are arranged in the order LSM8, LSM2, LSM3, LSM6, LSM5, LSM7 and LSM4. Component of the spliceosome U4/U6-U5 tri-snRNP complex composed of the U4, U6 and U5 snRNAs and at least PRP3, PRP4, PRP6, PRP8, PRP18, PRP31, PRP38, SNU13, SNU23, SNU66, SNU114, SPP381, SMB1, SMD1, SMD2, SMD3, SMX2, SMX3, LSM2, LSM3, LSM4, LSM5, LSM6, LSM7, LSM8, BRR2 and DIB1.

The protein resides in the nucleus. It is found in the cytoplasm. Component of the nuclear LSM2-LSM8 complex, which is involved in spliceosome assembly. The LSM2-LSM8 complex plays a role in the biogenesis of the spliceosomal U4/U6-U5 tri-snRNP complex by accelerating PRP24-mediated annealing of U4/U6 di-snRNA. The LSM2-LSM8 complex binds U6 snRNA terminating with a non-cyclic 3' phosphate group. LSM2-LSM8 is probably also involved in degradation of nuclear pre-mRNA by targeting them for decapping. LSM2-LSM8 could be involved in processing of pre-tRNAs, pre-rRNAs and U3 snoRNA, although involvement may be indirect. The sequence is that of LSM2-LSM8 complex subunit LSM8 (LSM8) from Saccharomyces cerevisiae (strain ATCC 204508 / S288c) (Baker's yeast).